The sequence spans 852 residues: Protein SBE22 (852 aa).

The segment at 1–158 (MTSIQERGTS…ADKSKINTFP (158 aa)) is disordered. Residues 15 to 26 (SLKEGEASDRSS) show a composition bias toward basic and acidic residues. Over residues 43–61 (PPSQTTLGRSRAGSNTMNK) the composition is skewed to polar residues. Ser-72 carries the phosphoserine modification. A compositionally biased stretch (polar residues) spans 74 to 96 (NLLSNMNCSDNGNGGNMLNSFVN). Residues 124–139 (TTEVFSSTSASSSLGD) are compositionally biased toward low complexity. Residue Ser-201 is modified to Phosphoserine. Positions 206–248 (AAEKTMNKSRHSYQEQFSSKKSQSSLLNSKQRSRAKSQTCSST) are disordered. The segment covering 224 to 235 (SKKSQSSLLNSK) has biased composition (low complexity). Phosphoserine is present on residues Ser-459, Ser-517, and Ser-520.

The protein belongs to the SBE2 family.

The protein localises to the cytoplasm. The protein resides in the golgi apparatus. With SBE2, is involved in cell wall integrity and polarity processes like bud growth, through the transport of CHS3 and UTR2 to sites of growth. This chain is Protein SBE22 (SBE22), found in Saccharomyces cerevisiae (strain YJM789) (Baker's yeast).